Here is an 831-residue protein sequence, read N- to C-terminus: DNA ligase (831 aa).

NAD(+)-binding positions include 34-38 (DADYD), 83-84 (SL), and glutamate 114. Catalysis depends on lysine 116, which acts as the N6-AMP-lysine intermediate. 4 residues coordinate NAD(+): arginine 137, glutamate 174, lysine 291, and lysine 315. 4 residues coordinate Zn(2+): cysteine 409, cysteine 412, cysteine 427, and cysteine 433. The BRCT domain occupies 749-831 (AHTAPLNGQS…LDFLEQYSAQ (83 aa)).

Belongs to the NAD-dependent DNA ligase family. LigA subfamily. Mg(2+) serves as cofactor. It depends on Mn(2+) as a cofactor.

The catalysed reaction is NAD(+) + (deoxyribonucleotide)n-3'-hydroxyl + 5'-phospho-(deoxyribonucleotide)m = (deoxyribonucleotide)n+m + AMP + beta-nicotinamide D-nucleotide.. Functionally, DNA ligase that catalyzes the formation of phosphodiester linkages between 5'-phosphoryl and 3'-hydroxyl groups in double-stranded DNA using NAD as a coenzyme and as the energy source for the reaction. It is essential for DNA replication and repair of damaged DNA. This chain is DNA ligase, found in Xylella fastidiosa (strain M12).